Consider the following 255-residue polypeptide: Geranylgeranylglyceryl phosphate synthase (255 aa).

Residues Asp-34 and Thr-64 each coordinate Mg(2+). Sn-glycerol 1-phosphate-binding positions include 182 to 188 (YLEAGSG), 213 to 214 (GG), and 235 to 236 (GN).

Belongs to the GGGP/HepGP synthase family. Group II subfamily. Mg(2+) is required as a cofactor.

It is found in the cytoplasm. It catalyses the reaction sn-glycerol 1-phosphate + (2E,6E,10E)-geranylgeranyl diphosphate = sn-3-O-(geranylgeranyl)glycerol 1-phosphate + diphosphate. The protein operates within membrane lipid metabolism; glycerophospholipid metabolism. Functionally, prenyltransferase that catalyzes the transfer of the geranylgeranyl moiety of geranylgeranyl diphosphate (GGPP) to the C3 hydroxyl of sn-glycerol-1-phosphate (G1P). This reaction is the first ether-bond-formation step in the biosynthesis of archaeal membrane lipids. The sequence is that of Geranylgeranylglyceryl phosphate synthase from Saccharolobus islandicus (strain M.16.27) (Sulfolobus islandicus).